Here is a 112-residue protein sequence, read N- to C-terminus: Small ribosomal subunit protein bS6 (112 aa).

This sequence belongs to the bacterial ribosomal protein bS6 family.

Binds together with bS18 to 16S ribosomal RNA. The polypeptide is Small ribosomal subunit protein bS6 (Hyphomonas neptunium (strain ATCC 15444)).